Consider the following 239-residue polypeptide: Ubiquinone biosynthesis O-methyltransferase (239 aa).

Arg-44, Gly-63, Asp-84, and Met-128 together coordinate S-adenosyl-L-methionine.

It belongs to the methyltransferase superfamily. UbiG/COQ3 family.

It carries out the reaction a 3-demethylubiquinol + S-adenosyl-L-methionine = a ubiquinol + S-adenosyl-L-homocysteine + H(+). The enzyme catalyses a 3-(all-trans-polyprenyl)benzene-1,2-diol + S-adenosyl-L-methionine = a 2-methoxy-6-(all-trans-polyprenyl)phenol + S-adenosyl-L-homocysteine + H(+). It participates in cofactor biosynthesis; ubiquinone biosynthesis. In terms of biological role, O-methyltransferase that catalyzes the 2 O-methylation steps in the ubiquinone biosynthetic pathway. The polypeptide is Ubiquinone biosynthesis O-methyltransferase (Xanthomonas oryzae pv. oryzae (strain MAFF 311018)).